We begin with the raw amino-acid sequence, 225 residues long: Histone H1 (225 aa).

The segment at Met-1–Thr-20 is disordered. An H15 domain is found at Pro-23–Lys-94. The interval Lys-95 to Val-147 is disordered. Residues Ala-107 to Lys-127 are compositionally biased toward basic residues. A compositionally biased stretch (low complexity) spans Ala-128 to Val-147.

Belongs to the histone H1/H5 family.

It localises to the nucleus. The protein localises to the chromosome. Its function is as follows. Could act as an H1-type linker histone. The chain is Histone H1 (HHOA) from Eremothecium gossypii (strain ATCC 10895 / CBS 109.51 / FGSC 9923 / NRRL Y-1056) (Yeast).